Consider the following 465-residue polypeptide: Cysteine--tRNA ligase (465 aa).

Cys-27 contacts Zn(2+). The 'HIGH' region signature appears at Pro-29–Asn-39. Residues Cys-207, His-232, and Glu-236 each coordinate Zn(2+). Positions Lys-264–Ser-268 match the 'KMSKS' region motif. Lys-267 contacts ATP.

This sequence belongs to the class-I aminoacyl-tRNA synthetase family. In terms of assembly, monomer. The cofactor is Zn(2+).

The protein resides in the cytoplasm. It catalyses the reaction tRNA(Cys) + L-cysteine + ATP = L-cysteinyl-tRNA(Cys) + AMP + diphosphate. This Caldicellulosiruptor saccharolyticus (strain ATCC 43494 / DSM 8903 / Tp8T 6331) protein is Cysteine--tRNA ligase.